A 235-amino-acid polypeptide reads, in one-letter code: Large ribosomal subunit protein uL1 (235 aa).

It belongs to the universal ribosomal protein uL1 family. In terms of assembly, part of the 50S ribosomal subunit.

Binds directly to 23S rRNA. The L1 stalk is quite mobile in the ribosome, and is involved in E site tRNA release. Functionally, protein L1 is also a translational repressor protein, it controls the translation of the L11 operon by binding to its mRNA. The polypeptide is Large ribosomal subunit protein uL1 (Methylobacterium nodulans (strain LMG 21967 / CNCM I-2342 / ORS 2060)).